Reading from the N-terminus, the 707-residue chain is NAD(P)H-quinone oxidoreductase subunit 5, chloroplastic (707 aa).

Transmembrane regions (helical) follow at residues 9 to 29 (WIIPFVPLPIPILIGIGLLLF), 40 to 60 (WAFPNILLLSIVMIFSIDLSI), 89 to 109 (IDSLTSIMSILITTVGIFVLI), 125 to 145 (FAYMSLFNTSMLGLVTSSNLI), 147 to 167 (IYIFWELVGMCSYLLIGFWFT), 184 to 204 (IGDFGLLLGILGFYWITGSFE), 219 to 239 (NEVHLLFVTLCASLLFAGAVA), 258 to 278 (TPISALIHAATMVATGIFLVA), 280 to 300 (LLPLFIVIPYIMNLISLIGII), 327 to 347 (LGYMMLALGMGSYRAALFHLI), 354 to 374 (ALLFLGSGSIIHSMEAVVGYS), 396 to 416 (IAFLIGTLSLCGIPPLACFWS), 425 to 445 (WLYSPIFAIIAWSTAGLTAFY), 538 to 558 (LFPMLILVLFTLFVGAIAIPL), and 592 to 612 (FLTNATFSVSIAGFGIFTAFL).

It belongs to the complex I subunit 5 family. In terms of assembly, NDH is composed of at least 16 different subunits, 5 of which are encoded in the nucleus.

The protein localises to the plastid. Its subcellular location is the chloroplast thylakoid membrane. The catalysed reaction is a plastoquinone + NADH + (n+1) H(+)(in) = a plastoquinol + NAD(+) + n H(+)(out). It catalyses the reaction a plastoquinone + NADPH + (n+1) H(+)(in) = a plastoquinol + NADP(+) + n H(+)(out). In terms of biological role, NDH shuttles electrons from NAD(P)H:plastoquinone, via FMN and iron-sulfur (Fe-S) centers, to quinones in the photosynthetic chain and possibly in a chloroplast respiratory chain. The immediate electron acceptor for the enzyme in this species is believed to be plastoquinone. Couples the redox reaction to proton translocation, and thus conserves the redox energy in a proton gradient. In Malvaviscus arboreus (Turk's cap), this protein is NAD(P)H-quinone oxidoreductase subunit 5, chloroplastic (ndhF).